The chain runs to 884 residues: Microsomal triglyceride transfer protein large subunit (884 aa).

An N-terminal signal peptide occupies residues 1–21 (MMPVAGLLLCVTAVLCTSALG). The region spanning 26 to 660 (LDNGKLYRYS…QSNNALLHGL (635 aa)) is the Vitellogenin domain. Cys172 and Cys192 are disulfide-bonded. Residue Asn348 is glycosylated (N-linked (GlcNAc...) asparagine). An intrachain disulfide couples Cys438 to Cys443. N-linked (GlcNAc...) asparagine glycosylation occurs at Asn787.

In terms of assembly, heterodimer; heterodimerizes with the protein disulfide isomerase. As to expression, highest expression in the proximal part of the anterior intestine. Lower expression in the distal part of the anterior intestine, in the posterior portion of the intestinal tube and liver. Very low expression levels in heart, brain, ovary, testis and kidney.

It is found in the endoplasmic reticulum. The protein resides in the golgi apparatus. It carries out the reaction a 1,2-diacyl-sn-glycero-3-phosphocholine(in) = a 1,2-diacyl-sn-glycero-3-phosphocholine(out). The catalysed reaction is a 1,2-diacyl-sn-glycero-3-phosphoethanolamine(in) = a 1,2-diacyl-sn-glycero-3-phosphoethanolamine(out). The enzyme catalyses a cholesterol ester(in) = a cholesterol ester(out). It catalyses the reaction a triacyl-sn-glycerol(in) = a triacyl-sn-glycerol(out). With respect to regulation, inhibited by naringenin. Catalyzes the transport of triglyceride between phospholipid surfaces. Catalyzes the transport of cholesteryl ester, and phospholipid between phospholipid surfaces. Required for the assembly and secretion of plasma lipoproteins that contain apolipoprotein B. Required for yolk lipid utilization and absorption of dietary lipids in larvae. In Danio rerio (Zebrafish), this protein is Microsomal triglyceride transfer protein large subunit.